The chain runs to 184 residues: Large ribosomal subunit protein uL15 (184 aa).

A disordered region spans residues 1–62 (MDLSSLRPAK…QMPMYRRLPK (62 aa)). Over residues 21-35 (RGPGSGNGTTAGKGN) the composition is skewed to gly residues.

Belongs to the universal ribosomal protein uL15 family. In terms of assembly, part of the 50S ribosomal subunit.

Functionally, binds to the 23S rRNA. This Chlorobaculum parvum (strain DSM 263 / NCIMB 8327) (Chlorobium vibrioforme subsp. thiosulfatophilum) protein is Large ribosomal subunit protein uL15.